Here is a 128-residue protein sequence, read N- to C-terminus: Probable 4-amino-4-deoxy-L-arabinose-phosphoundecaprenol flippase subunit ArnF (128 aa).

Over 1 to 2 (MG) the chain is Cytoplasmic. A helical transmembrane segment spans residues 3-23 (LMWGLFSVIIASAAQLSLGFA). Residues 24-35 (ASHLPPMTHLWD) lie on the Periplasmic side of the membrane. A helical membrane pass occupies residues 36–56 (FIAALLAFGLDARILLLGLLG). The Cytoplasmic portion of the chain corresponds to 57–76 (YLLSVFCWYKTLHKLALSKA). A helical membrane pass occupies residues 77 to 97 (YALLSMSYVLVWIASMVLPGW). Residues 98–100 (EGT) are Periplasmic-facing. A helical transmembrane segment spans residues 101–121 (FSLKALLGVACIMSGLMLIFL). Residues 122–128 (PTTKQRY) lie on the Cytoplasmic side of the membrane.

The protein belongs to the ArnF family. In terms of assembly, heterodimer of ArnE and ArnF.

It is found in the cell inner membrane. Its pathway is bacterial outer membrane biogenesis; lipopolysaccharide biosynthesis. In terms of biological role, translocates 4-amino-4-deoxy-L-arabinose-phosphoundecaprenol (alpha-L-Ara4N-phosphoundecaprenol) from the cytoplasmic to the periplasmic side of the inner membrane. The chain is Probable 4-amino-4-deoxy-L-arabinose-phosphoundecaprenol flippase subunit ArnF from Escherichia coli O127:H6 (strain E2348/69 / EPEC).